A 398-amino-acid chain; its full sequence is MKVLVLNCGSSSIKYKLFDMDSKEVIAQGGIEKIGLKDSFLKLTLPNGEKKILEKDIPEHTVGVEFILNTLVSPEYGAIQSLEEINAVGHRMVHGGERFSKSVLLTKEVLEAFAACNDLAPLHNPANLKGVDAITAILPNVPQIGVFDTAFHQTMPEHAYLYAIPYELYKKYGVRRYGFHGTSHRYVSQRVCEYLGIKPEGLKLITCHIGNGGSIAAIKDGKCIDTSMGLTPLEGLMMGTRSGDIDAGAVTFIMDKEGLTTTGISNLLNKKSGVAGMMNGSSDMRDLEAAVAKGDPQAILTEQMYFYRIKKYIGAYAAALGGVDVILFTGGVGENQATCRAGVCEGLEFLGVKLDPEKNKVRGEEAIISTDDSRVKVVVIPTDEELLIASDTMAILDK.

Asn-7 is a Mg(2+) binding site. Lys-14 contributes to the ATP binding site. A substrate-binding site is contributed by Arg-91. Catalysis depends on Asp-148, which acts as the Proton donor/acceptor. ATP is bound by residues 208-212 (HIGNG), 283-285 (DMR), and 331-335 (GVGEN). Glu-384 is a Mg(2+) binding site.

It belongs to the acetokinase family. As to quaternary structure, homodimer. It depends on Mg(2+) as a cofactor. Mn(2+) serves as cofactor.

It localises to the cytoplasm. The enzyme catalyses acetate + ATP = acetyl phosphate + ADP. Its pathway is metabolic intermediate biosynthesis; acetyl-CoA biosynthesis; acetyl-CoA from acetate: step 1/2. In terms of biological role, catalyzes the formation of acetyl phosphate from acetate and ATP. Can also catalyze the reverse reaction. In Bacteroides fragilis (strain ATCC 25285 / DSM 2151 / CCUG 4856 / JCM 11019 / LMG 10263 / NCTC 9343 / Onslow / VPI 2553 / EN-2), this protein is Acetate kinase.